The chain runs to 231 residues: MPAIAPLASPPQSQEQLLAQARQLAGYSLGELAALAGIPIPRDLKRDKGWTGILLELWLGASAGSKPEQDFAALGVELKTIPIDSRGRPLETTFVCVAPLTGNSGVTWESSHVRHKLQRVLWIPVEGERTIPLAARRVGAPLLWSPDEDEERQLRMDWEELMDLIVLGEVERITARHGEVLQLRPKAANSKALTEAIGARGETILTLPRGFYLKKNFTAALLARHFLLQHD.

The protein belongs to the MutH family.

Its subcellular location is the cytoplasm. Sequence-specific endonuclease that cleaves unmethylated GATC sequences. It is involved in DNA mismatch repair. This is DNA mismatch repair protein MutH from Klebsiella pneumoniae subsp. pneumoniae (strain ATCC 700721 / MGH 78578).